The chain runs to 396 residues: S-adenosylmethionine synthase 2 (396 aa).

Residue Glu13 participates in Mg(2+) binding. Residue His19 coordinates ATP. Position 47 (Glu47) interacts with K(+). L-methionine-binding residues include Glu60 and Gln103. ATP-binding positions include 171–173 (DGK), 239–242 (SGRF), Asp250, 256–257 (RK), Ala273, Lys277, and Lys281. Asp250 lines the L-methionine pocket. Lys281 provides a ligand contact to L-methionine.

Belongs to the AdoMet synthase family. As to quaternary structure, homotetramer. Mn(2+) serves as cofactor. Requires Mg(2+) as cofactor. The cofactor is Co(2+). K(+) is required as a cofactor.

It is found in the cytoplasm. It catalyses the reaction L-methionine + ATP + H2O = S-adenosyl-L-methionine + phosphate + diphosphate. Its pathway is amino-acid biosynthesis; S-adenosyl-L-methionine biosynthesis; S-adenosyl-L-methionine from L-methionine: step 1/1. Its function is as follows. Catalyzes the formation of S-adenosylmethionine from methionine and ATP. The reaction comprises two steps that are both catalyzed by the same enzyme: formation of S-adenosylmethionine (AdoMet) and triphosphate, and subsequent hydrolysis of the triphosphate. In Dianthus caryophyllus (Carnation), this protein is S-adenosylmethionine synthase 2 (SAM2).